A 131-amino-acid chain; its full sequence is UPF0102 protein YraN (131 aa).

Over residues 1-19 (MATVPTRSGSPRQLTTKQT) the composition is skewed to polar residues. The interval 1-20 (MATVPTRSGSPRQLTTKQTG) is disordered.

Belongs to the UPF0102 family.

This Escherichia coli O157:H7 protein is UPF0102 protein YraN.